A 229-amino-acid polypeptide reads, in one-letter code: MELLLLSNSTLPGKAWLEHALPLIAEQLQGRRSAVFIPFAGVTQTWDDYTAKTAAVLASLGVSVTGIHSVVDPVAAIENAEIVIVGGGNTFQLLKQCRERGLLAPITDVVKRGALYIGWSAGANLACPTIRTTNDMPIVDPQGFDALNLFPLQINPHFTNALPEGHKGETREQRIRELLVVAPELTIIGLPEGNWITVSKGHATLGGPNTTYVFKAGEEAVPLEAGHRF.

Catalysis depends on charge relay system residues Ser120, Asp135, and His157.

Belongs to the peptidase S51 family.

It localises to the cytoplasm. The catalysed reaction is Dipeptidase E catalyzes the hydrolysis of dipeptides Asp-|-Xaa. It does not act on peptides with N-terminal Glu, Asn or Gln, nor does it cleave isoaspartyl peptides.. Its function is as follows. Hydrolyzes dipeptides containing N-terminal aspartate residues. May play a role in allowing the cell to use peptide aspartate to spare carbon otherwise required for the synthesis of the aspartate family of amino acids. This chain is Peptidase E, found in Escherichia coli O6:K15:H31 (strain 536 / UPEC).